Here is a 572-residue protein sequence, read N- to C-terminus: 2-isopropylmalate synthase (572 aa).

Positions 31–305 (PIWMSTDLRD…DPGLDFSNIN (275 aa)) constitute a Pyruvate carboxyltransferase domain. The Mg(2+) site is built by Asp40, His244, His246, and Asn280. Residues 437 to 572 (NATPVHYVGH…MNDATESVGV (136 aa)) are regulatory domain.

This sequence belongs to the alpha-IPM synthase/homocitrate synthase family. LeuA type 2 subfamily. In terms of assembly, homodimer. Mg(2+) is required as a cofactor.

It is found in the cytoplasm. The catalysed reaction is 3-methyl-2-oxobutanoate + acetyl-CoA + H2O = (2S)-2-isopropylmalate + CoA + H(+). Its pathway is amino-acid biosynthesis; L-leucine biosynthesis; L-leucine from 3-methyl-2-oxobutanoate: step 1/4. In terms of biological role, catalyzes the condensation of the acetyl group of acetyl-CoA with 3-methyl-2-oxobutanoate (2-ketoisovalerate) to form 3-carboxy-3-hydroxy-4-methylpentanoate (2-isopropylmalate). In Paraburkholderia xenovorans (strain LB400), this protein is 2-isopropylmalate synthase.